The chain runs to 585 residues: Switch-associated protein 70 (585 aa).

The PH domain maps to 210–306 (DVLKQGYMIK…WIQAIHSTIH (97 aa)). Positions 316-532 (HKEARQRRKE…KLEMAAKMTK (217 aa)) form a coiled coil.

As to quaternary structure, the SWAP complex consists of NPM1, NCL, PARP1 and SWAP70. Post-translationally, tyrosine-phosphorylated.

It is found in the cytoplasm. The protein resides in the cell membrane. It localises to the nucleus. The protein localises to the cell projection. Its subcellular location is the lamellipodium. In terms of biological role, phosphatidylinositol 3,4,5-trisphosphate-dependent guanine nucleotide exchange factor (GEF) which, independently of RAS, transduces signals from tyrosine kinase receptors to RAC. It also mediates signaling of membrane ruffling. Regulates the actin cytoskeleton as an effector or adapter protein in response to agonist stimulated phosphatidylinositol (3,4)-bisphosphate production and cell protrusion. In Bos taurus (Bovine), this protein is Switch-associated protein 70 (SWAP70).